We begin with the raw amino-acid sequence, 654 residues long: Potassium voltage-gated channel subfamily A member 4 (654 aa).

The Cytoplasmic segment spans residues 1–305; sequence MEVAMVSAES…LLFEYPESSS (305 aa). The disordered stretch occupies residues 24-145; that stretch reads QARARERERL…EEGRFYYSEE (122 aa). Residues 36–50 are compositionally biased toward low complexity; that stretch reads SRAAAAAAVAAATAA. The span at 81-99 shows a compositional bias: basic residues; the sequence is GSRRRRRQRTEKKKLHHRQ. Phosphoserine is present on Ser-122. Residues 122 to 137 are compositionally biased toward acidic residues; sequence SEEEEDEEEEEEEEEE. A helical transmembrane segment spans residues 306–327; sequence PARGIAIVSVLVILISIVIFCL. Residues 328–371 are Extracellular-facing; that stretch reads ETLPEFRDDRDLIMALSAGGHSRLLNDTSAPHLENSGHTIFNDP. The N-linked (GlcNAc...) asparagine glycan is linked to Asn-353. The helical transmembrane segment at 372–393 threads the bilayer; that stretch reads FFIVETVCIVWFSFEFVVRCFA. Residues 394–404 lie on the Cytoplasmic side of the membrane; that stretch reads CPSQALFFKNI. Residues 405–425 traverse the membrane as a helical segment; that stretch reads MNIIDIVSILPYFITLGTDLA. Over 426–440 the chain is Extracellular; the sequence is QQQGGGNGQQQQAMS. Residues 441-461 form a helical; Voltage-sensor membrane-spanning segment; the sequence is FAILRIIRLVRVFRIFKLSRH. Over 462–476 the chain is Cytoplasmic; that stretch reads SKGLQILGHTLRASM. The S4-S5 linker stretch occupies residues 463–476; it reads KGLQILGHTLRASM. Residues 477–498 traverse the membrane as a helical segment; it reads RELGLLIFFLFIGVILFSSAVY. Residues 499–512 lie on the Extracellular side of the membrane; sequence FAEADEPTTHFQSI. An intramembrane region (helical) is located at residues 513 to 524; sequence PDAFWWAVVTMT. Positions 525 to 530 match the Selectivity filter motif; the sequence is TVGYGD. An intramembrane segment occupies 525–532; that stretch reads TVGYGDMK. Topologically, residues 533–539 are extracellular; it reads PITVGGK. A helical transmembrane segment spans residues 540 to 568; that stretch reads IVGSLCAIAGVLTIALPVPVIVSNFNYFY. At 569-654 the chain is on the cytoplasmic side; that stretch reads HRETENEEQT…SNAKAVETDV (86 aa). The residue at position 600 (Ser-600) is a Phosphoserine; by PKA. The span at 630 to 641 shows a compositional bias: basic and acidic residues; that stretch reads CQGKGDESETDK. Residues 630–654 form a disordered region; it reads CQGKGDESETDKNNCSNAKAVETDV. The PDZ-binding motif lies at 652 to 654; it reads TDV.

It belongs to the potassium channel family. A (Shaker) (TC 1.A.1.2) subfamily. Kv1.4/KCNA4 sub-subfamily. Homotetramer and heterotetramer of potassium channel proteins. Interacts with KCNAB1 and KCNAB2. Interacts with DLG1, DLG2 and DLG4 via their PDZ domains. Interacts with SIGMAR1. Detected in a complex with KCNA1. Interacts with KCNA2. Part of a complex containing KCNA1, KCNAB1 and LGI1. Interacts (via cytoplasmic N-terminal domain) with KCNRG. As to expression, expressed in the brain, lens and retina.

It localises to the cell membrane. The protein resides in the cell projection. The protein localises to the axon. The catalysed reaction is K(+)(in) = K(+)(out). Its function is as follows. Voltage-gated potassium channel that mediates transmembrane potassium transport in excitable membranes. Forms tetrameric potassium-selective channels through which potassium ions pass in accordance with their electrochemical gradient. The channel alternates between opened and closed conformations in response to the voltage difference across the membrane. Can form functional homotetrameric channels and heterotetrameric channels that contain variable proportions of KCNA1, KCNA2, KCNA4, KCNA5, and possibly other family members as well; channel properties depend on the type of alpha subunits that are part of the channel. Channel properties are modulated by cytoplasmic beta subunits that regulate the subcellular location of the alpha subunits and promote rapid inactivation. In vivo, membranes probably contain a mixture of heteromeric potassium channel complexes, making it difficult to assign currents observed in intact tissues to any particular potassium channel family member. Homotetrameric KCNA4 forms a potassium channel that opens in response to membrane depolarization, followed by rapid spontaneous channel closure. Likewise, a heterotetrameric channel formed by KCNA1 and KCNA4 shows rapid inactivation. The protein is Potassium voltage-gated channel subfamily A member 4 (Kcna4) of Mus musculus (Mouse).